The sequence spans 1199 residues: Tubulin monoglutamylase TTLL4 (1199 aa).

Positions 1-25 (MASAGTQHYSIGLRQKNSFKQSGPS) are enriched in polar residues. Disordered stretches follow at residues 1-43 (MASA…RVWP), 472-517 (IQLG…ELVD), and 525-544 (RDEN…SAVS). Residues 477-495 (SEKERPEEARELDSSDRDI) are compositionally biased toward basic and acidic residues. Residues 506–517 (AETEDTEEELVD) show a composition bias toward acidic residues. Positions 604–947 (RKLLRWKMST…VLPNAEDIIS (344 aa)) constitute a TTL domain. The residue at position 691 (serine 691) is a Phosphoserine. ATP-binding positions include lysine 721, 727–728 (RG), 749–752 (QRYL), and 762–764 (KFD). Arginine 727 contacts a protein. Arginine 788 serves as a coordination point for L-glutamate. 809–810 (TN) is an ATP binding site. L-glutamate contacts are provided by tyrosine 811, serine 812, and lysine 833. Residues aspartate 893, glutamate 906, and asparagine 908 each contribute to the Mg(2+) site. The interval 918–1029 (PLDISIKGQM…RGQFERIFPS (112 aa)) is c-MTBD region. Residue lysine 924 participates in L-glutamate binding. Polar residues predominate over residues 1130–1141 (GTTPKSKKTQAG). Positions 1130–1199 (GTTPKSKKTQ…ISDSLLAVSP (70 aa)) are disordered. The segment covering 1151–1160 (SSKDSEDTSK) has biased composition (basic and acidic residues). Polar residues predominate over residues 1164–1192 (LSTQTLPVIKCSGQTSRLSASSTFQSISD).

This sequence belongs to the tubulin--tyrosine ligase family. It depends on Mg(2+) as a cofactor.

Its subcellular location is the cytoplasm. The protein resides in the cell projection. The protein localises to the cilium. It localises to the cytoskeleton. It is found in the cilium basal body. It catalyses the reaction L-glutamyl-[protein] + L-glutamate + ATP = gamma-L-glutamyl-L-glutamyl-[protein] + ADP + phosphate + H(+). Functionally, monoglutamylase which modifies both tubulin and non-tubulin proteins, adding a single glutamate on the gamma-carboxyl group of specific glutamate residues of target proteins. Involved in the side-chain initiation step of the polyglutamylation reaction but not in the elongation step. Preferentially modifies beta-tail tubulin over the alpha-tubulin. Monoglutamylates nucleosome assembly proteins NAP1L1 and NAP1L4. Monoglutamylates nucleotidyltransferase CGAS, leading to inhibition of CGAS catalytic activity, thereby preventing antiviral defense function. Involved in KLF4 glutamylation which impedes its ubiquitination, thereby leading to somatic cell reprogramming, pluripotency maintenance and embryogenesis. This Homo sapiens (Human) protein is Tubulin monoglutamylase TTLL4.